Reading from the N-terminus, the 206-residue chain is Cytidylate kinase (206 aa).

9–17 is a binding site for ATP; it reads GPAAAGKGT.

This sequence belongs to the cytidylate kinase family. Type 1 subfamily.

The protein localises to the cytoplasm. The catalysed reaction is CMP + ATP = CDP + ADP. It carries out the reaction dCMP + ATP = dCDP + ADP. This Cereibacter sphaeroides (strain ATCC 17023 / DSM 158 / JCM 6121 / CCUG 31486 / LMG 2827 / NBRC 12203 / NCIMB 8253 / ATH 2.4.1.) (Rhodobacter sphaeroides) protein is Cytidylate kinase.